Reading from the N-terminus, the 509-residue chain is Coiled-coil domain-containing protein 181 (509 aa).

Disordered stretches follow at residues 1 to 122 and 237 to 369; these read MDED…EDEE and FLPP…EKKK. Composition is skewed to basic and acidic residues over residues 22 to 33 and 41 to 56; these read DLEWLINDKEKS and ACKKEDDLDQVLKENE. The span at 60–69 shows a compositional bias: polar residues; the sequence is ELGQQLSDPD. Basic and acidic residues-rich tracts occupy residues 70–82 and 266–275; these read NSPKDEALPRRND and IKKEESEAKG. The span at 319 to 333 shows a compositional bias: polar residues; the sequence is RIQSAGVSPVTSTYC. 2 coiled-coil regions span residues 335-377 and 418-488; these read SPRQ…VFKA and LKKK…RSKQ. Positions 337 to 369 are enriched in basic and acidic residues; the sequence is RQKELQKQLERKREKLKREEEQRKLEEENEKKK.

Belongs to the CCDC181 family. In terms of assembly, homodimer. Interacts with HOOK1. Interacts with HOOK2. Interacts with HOOK3. In terms of tissue distribution, predominantly expressed in testis. Expressed at lower level in brain, eye, trachea and lung. Barely expressed in tongue, heart, liver, kidney, spleen and muscle. Present at high level in elongating spermatids, whereas lower levels are observed in round spermatids (at protein level).

It is found in the cytoplasm. Its subcellular location is the cytoskeleton. The protein localises to the cell projection. The protein resides in the cilium. It localises to the flagellum. Its function is as follows. Microtubule-binding protein that localizes to the microtubular manchette of elongating spermatids. In Mus musculus (Mouse), this protein is Coiled-coil domain-containing protein 181.